The following is a 147-amino-acid chain: 3-dehydroquinate dehydratase (147 aa).

The active-site Proton acceptor is the tyrosine 25. Substrate contacts are provided by asparagine 76, histidine 82, and aspartate 89. The active-site Proton donor is histidine 102. Residues 103–104 and arginine 113 each bind substrate; that span reads LS.

It belongs to the type-II 3-dehydroquinase family. In terms of assembly, homododecamer.

The catalysed reaction is 3-dehydroquinate = 3-dehydroshikimate + H2O. It functions in the pathway metabolic intermediate biosynthesis; chorismate biosynthesis; chorismate from D-erythrose 4-phosphate and phosphoenolpyruvate: step 3/7. In terms of biological role, catalyzes a trans-dehydration via an enolate intermediate. The sequence is that of 3-dehydroquinate dehydratase from Nostoc sp. (strain PCC 7120 / SAG 25.82 / UTEX 2576).